The following is a 325-amino-acid chain: MHTPVLTDRVLELLAPALSRPGAVVVDATVGLGGHAAALLAAFPEVRVVGLDRDLDALAHSGERLRALAPERVRLVHAVYDEIGTVLAGLGSARVQGVLFDLGVSSLQLDTDARGFAYSRDAPLDMRMDATRGLTAAEVLNTYDAAALARILRDYGEERFARRIAESVVRARAVEPFTTSARLVDLVRDAIPAPARRTGGNPAKRTFQALRIEVNSELDVLARALPAAFDALAVGGRLVVLSYHSLEDRLVKRELRGYAETLVPPDMPVVPAGAEPRLRWLTRGAEPAGEVEKADNPRAASVRLRAAERTAPNPDRTQPTIGGAS.

S-adenosyl-L-methionine-binding positions include 33–35 (GGH), aspartate 52, leucine 87, aspartate 101, and glutamine 108. Positions 285–325 (AEPAGEVEKADNPRAASVRLRAAERTAPNPDRTQPTIGGAS) are disordered. The span at 315–325 (DRTQPTIGGAS) shows a compositional bias: polar residues.

It belongs to the methyltransferase superfamily. RsmH family.

It localises to the cytoplasm. It carries out the reaction cytidine(1402) in 16S rRNA + S-adenosyl-L-methionine = N(4)-methylcytidine(1402) in 16S rRNA + S-adenosyl-L-homocysteine + H(+). Specifically methylates the N4 position of cytidine in position 1402 (C1402) of 16S rRNA. This Frankia alni (strain DSM 45986 / CECT 9034 / ACN14a) protein is Ribosomal RNA small subunit methyltransferase H.